The primary structure comprises 436 residues: MSTGFFGDIQKVKYEGPDSTNPLAFRHYQPDEIVMGKRMEDHLRFAVAYWHTFTWPGGDPFGGQTFLRPWFEDTMKAAKLKADVAFEFFSLLGSPYYCFHDADVRPEGKTFAENTKNLNEIVDYFAEKQAATGTKLLWGTANLFSHRRYMSGAATNPDPDVFAFAAATVKTCIDATQKLGGENYVLWGGREGYETLLNTDIGRELDQLGRFLNLVVEYKHKIGYKGTILIEPKPQEPTKHQYDYDVATVYGFLKKHGLENEVKLNIEQGHAILAGHSFEHELALANALGIFGSIDMNRNDYQSGWDTDQFPNNVPEMALAYYHVLAGGGFKTGGTNFDSKLRRQSLDPADLLIGHIGGMDCCARGLKAAAKMIEDKALSQPLADRYAGWESAEAQKLFRGEYSLDEITHYVESHDVNPQPRSGKQELLENVVNRYV.

Catalysis depends on residues His100 and Asp103. Mg(2+) contacts are provided by Glu231, Glu267, His270, Asp295, Asp306, Asp308, and Asp338.

Belongs to the xylose isomerase family. Homotetramer. Mg(2+) serves as cofactor.

The protein resides in the cytoplasm. It carries out the reaction alpha-D-xylose = alpha-D-xylulofuranose. This Rhizobium johnstonii (strain DSM 114642 / LMG 32736 / 3841) (Rhizobium leguminosarum bv. viciae) protein is Xylose isomerase.